The following is a 433-amino-acid chain: Pyrimidine-nucleoside phosphorylase (433 aa).

Position 81–83 (81–83 (KHS)) interacts with phosphate. Residues glycine 88 and threonine 90 each contribute to the K(+) site. Residues threonine 92, 108–110 (KMS), and threonine 120 each bind phosphate. The substrate site is built by arginine 168 and lysine 187. K(+) contacts are provided by leucine 243, alanine 246, and glutamate 255.

Belongs to the thymidine/pyrimidine-nucleoside phosphorylase family. Homodimer. Requires K(+) as cofactor.

The enzyme catalyses uridine + phosphate = alpha-D-ribose 1-phosphate + uracil. It carries out the reaction thymidine + phosphate = 2-deoxy-alpha-D-ribose 1-phosphate + thymine. It catalyses the reaction 2'-deoxyuridine + phosphate = 2-deoxy-alpha-D-ribose 1-phosphate + uracil. Its function is as follows. Catalyzes phosphorolysis of the pyrimidine nucleosides uridine, thymidine and 2'-deoxyuridine with the formation of the corresponding pyrimidine base and ribose-1-phosphate. The protein is Pyrimidine-nucleoside phosphorylase (pdp) of Staphylococcus epidermidis (strain ATCC 35984 / DSM 28319 / BCRC 17069 / CCUG 31568 / BM 3577 / RP62A).